Reading from the N-terminus, the 163-residue chain is C-type lectin lectoxin-Lio1 (163 aa).

An N-terminal signal peptide occupies residues 1-21 (MERFIFAALLVVALSLSGTGA). 3 cysteine pairs are disulfide-bonded: Cys-25–Cys-36, Cys-53–Cys-152, and Cys-127–Cys-144. The C-type lectin domain occupies 32–153 (SDGYCYKVFK…CRSKRYFICK (122 aa)). The short motif at 117–119 (EPN) is the Mannose-binding element. Residues Glu-125 and Asp-141 each coordinate Ca(2+).

The protein belongs to the true venom lectin family. Expressed by the venom gland.

The protein resides in the secreted. Functionally, mannose-binding lectin which recognizes specific carbohydrate structures and agglutinates a variety of animal cells by binding to cell-surface glycoproteins and glycolipids. May be a calcium-dependent lectin. The protein is C-type lectin lectoxin-Lio1 of Erythrolamprus poecilogyrus (Water snake).